The chain runs to 84 residues: Small ribosomal subunit protein bS18 (84 aa).

It belongs to the bacterial ribosomal protein bS18 family. In terms of assembly, part of the 30S ribosomal subunit. Forms a tight heterodimer with protein bS6.

Binds as a heterodimer with protein bS6 to the central domain of the 16S rRNA, where it helps stabilize the platform of the 30S subunit. This chain is Small ribosomal subunit protein bS18, found in Polynucleobacter necessarius subsp. necessarius (strain STIR1).